Reading from the N-terminus, the 360-residue chain is GDSL esterase/lipase At1g06990 (360 aa).

The N-terminal stretch at 1–22 (MLIHVIIFMIITTMQFSTTCHA) is a signal peptide. Asn26 and Asn31 each carry an N-linked (GlcNAc...) asparagine glycan. Ser44 serves as the catalytic Nucleophile. 3 N-linked (GlcNAc...) asparagine glycosylation sites follow: Asn73, Asn126, and Asn272. Active-site residues include Asp335 and His338.

The protein belongs to the 'GDSL' lipolytic enzyme family.

It localises to the secreted. The sequence is that of GDSL esterase/lipase At1g06990 from Arabidopsis thaliana (Mouse-ear cress).